A 352-amino-acid chain; its full sequence is Strictosidine synthase (352 aa).

An N-terminal signal peptide occupies residues M1–S31. N-linked (GlcNAc...) asparagine glycosylation is found at N95 and N187.

The protein belongs to the strictosidine synthase family. Monomer.

The protein resides in the vacuole. The enzyme catalyses 3alpha(S)-strictosidine + H2O = secologanin + tryptamine. It participates in alkaloid biosynthesis; 3alpha(S)-strictosidine biosynthesis; 3alpha(S)-strictosidine from secologanin and tryptamine: step 1/1. Functionally, catalyzes the stereospecific condensation of tryptamine with secologanin to form strictosidine, the key intermediate of indole alkaloid biosynthesis. The chain is Strictosidine synthase (STR1) from Catharanthus roseus (Madagascar periwinkle).